Reading from the N-terminus, the 383-residue chain is tRNA-specific 2-thiouridylase MnmA (383 aa).

Residues 29–36 (GMSGGVDS) and Met-55 each bind ATP. The interval 115-117 (NPD) is interaction with target base in tRNA. The active-site Nucleophile is Cys-120. Cys-120 and Cys-217 are joined by a disulfide. Gly-145 contacts ATP. An interaction with tRNA region spans residues 167-169 (KDQ). The active-site Cysteine persulfide intermediate is the Cys-217. The interaction with tRNA stretch occupies residues 329 to 330 (RY).

The protein belongs to the MnmA/TRMU family.

The protein localises to the cytoplasm. The enzyme catalyses S-sulfanyl-L-cysteinyl-[protein] + uridine(34) in tRNA + AH2 + ATP = 2-thiouridine(34) in tRNA + L-cysteinyl-[protein] + A + AMP + diphosphate + H(+). In terms of biological role, catalyzes the 2-thiolation of uridine at the wobble position (U34) of tRNA, leading to the formation of s(2)U34. This chain is tRNA-specific 2-thiouridylase MnmA, found in Histophilus somni (strain 129Pt) (Haemophilus somnus).